The primary structure comprises 531 residues: Pescadillo homolog (531 aa).

The BRCT domain occupies Ser309–Pro398.

The protein belongs to the pescadillo family.

The protein resides in the nucleus. Its subcellular location is the nucleolus. It is found in the nucleoplasm. Its function is as follows. Required for maturation of ribosomal RNAs and formation of the large ribosomal subunit. The chain is Pescadillo homolog from Caenorhabditis elegans.